Consider the following 304-residue polypeptide: Uricase (304 aa).

N-acetylalanine is present on A2. Residues K10 and K23 each carry the N6-acetyllysine; alternate modification. Residues K10 and K23 each carry the N6-succinyllysine; alternate modification. K23 serves as the catalytic Charge relay system. Residues K27 and K36 each carry the N6-acetyllysine modification. 2 positions are modified to phosphoserine: S39 and S63. The active-site Charge relay system is T68. Residues T68 and D69 each coordinate urate. N6-acetyllysine occurs at positions 118, 122, and 164. Position 170 (F170) interacts with urate. 2 positions are modified to N6-acetyllysine: K175 and K185. Position 187 (R187) interacts with urate. K221 and K228 each carry N6-acetyllysine; alternate. N6-succinyllysine; alternate occurs at positions 221 and 228. S232 carries the phosphoserine modification. The urate site is built by V235, Q236, and N262. H264 functions as the Charge relay system in the catalytic mechanism. K278 carries the N6-acetyllysine modification. Position 289 is a phosphotyrosine (Y289). A Microbody targeting signal motif is present at residues 302–304 (SRL).

This sequence belongs to the uricase family. As to quaternary structure, homotetramer.

The protein localises to the peroxisome. It catalyses the reaction urate + O2 + H2O = 5-hydroxyisourate + H2O2. It functions in the pathway purine metabolism; urate degradation; (S)-allantoin from urate: step 1/3. Functionally, catalyzes the oxidation of uric acid to 5-hydroxyisourate, which is further processed to form (S)-allantoin. The protein is Uricase (UOX) of Bos taurus (Bovine).